The following is a 433-amino-acid chain: Urokinase-type plasminogen activator (433 aa).

Residues 1-20 (MKVWLASLFLCALVVKNSEG) form the signal peptide. In terms of domain architecture, EGF-like spans 28–64 (DESNCGCQNGGVCVSYKYFSRIRRCSCPRKFQGEHCE). Disulfide bonds link Cys-32-Cys-40, Cys-34-Cys-52, Cys-54-Cys-63, Cys-71-Cys-152, Cys-92-Cys-134, and Cys-123-Cys-147. The binds urokinase plasminogen activator surface receptor stretch occupies residues 35 to 58 (QNGGVCVSYKYFSRIRRCSCPRKF). The Kringle domain occupies 71 to 152 (CYHGNGDSYR…FVQECMVHDC (82 aa)). The tract at residues 153 to 179 (SLSKKPSSSVDQQGFQCGQKALRPRFK) is connecting peptide. Position 159 is a phosphoserine (Ser-159). Cystine bridges form between Cys-169–Cys-301, Cys-211–Cys-227, Cys-219–Cys-290, Cys-315–Cys-384, Cys-347–Cys-363, and Cys-374–Cys-402. Residues 180 to 426 (IVGGEFTEVE…FLDWIQSHIG (247 aa)) form the Peptidase S1 domain. Catalysis depends on charge relay system residues His-226 and Asp-277. The active-site Charge relay system is the Ser-378.

It belongs to the peptidase S1 family. As to quaternary structure, found in high and low molecular mass forms. Each consists of two chains, A and B. The high molecular mass form contains a long chain A which is cleaved to yield a short chain A. Forms heterodimer with SERPINA5. Binds LRP1B; binding is followed by internalization and degradation. Interacts with MRC2. Interacts with PLAUR. In complex with SERPINE1, interacts with PLAUR/uPAR. Interacts with SORL1 and LRP1, either alone or in complex with SERPINE1; these interactions are abolished in the presence of LRPAP1/RAP. The ternary complex composed of PLAUR-PLAU-PAI1 also interacts with SORLA. Post-translationally, produced as an inactive single-chain protein (pro-uPA or sc-uPA), is processed into the active disulfide-linked two-chain form of PLAU/uPA by a proteolytic event mediated, at least, by TMPRSS4.

It localises to the secreted. The enzyme catalyses Specific cleavage of Arg-|-Val bond in plasminogen to form plasmin.. Its activity is regulated as follows. Inhibited by SERPINA5. Inhibited by SERPINE1. Functionally, specifically cleaves the zymogen plasminogen to form the active enzyme plasmin. The chain is Urokinase-type plasminogen activator (Plau) from Mus musculus (Mouse).